The following is a 1461-amino-acid chain: MGARNSVLRGKKADELEKIRLRPGGKKKYKLKHIVWAANELDRFGLAESLLESKEGCQKILTVLDPLVPTGSENLKSLFNTVCVIWCIHAEEKVKDTEGAKQIVQRHLVAETGTAEKMPNTSRPTAPPSGKNFPVQQVAGNYTHIPLSPGTLNAWVKLVEEKKFGAEVVPGFQALSEGCTPYDINQMLNCVGDHQAAMQIIREIINEEAADWDVAHPIPGPLPAGQLREPRGSDIAGTTSTVEEQIQWMFRPQNPVPVGNIYRRWIQIGLQKCVRMYNPTNILDINQGPKEPFQSYVDRFYKSLRAEQTDPAVKNWMTQTLLIQNANPDCKLVLKGLGMNPTLEEMLTTCQGVGGPGQKARLMAEALKEVMAPAPIPFAAAQQRKTFKCWNCGKEGHSARQWSAPRRQGCWKCGKSGHVMANCPDRQAGFLRDWPLGKEGPQLPRGPSPAGANTNSTPIGSSSGPTGEIYAARKKAKGAERETVQGSDRGLTAFRAGRDTMQGDDRGLAAPQFSLWKRPVVTAHIEGQPVEVLLDTRANDSIVAGIELGSNYSPKIVGGIGGFINTKEYKNVEIEVLGKRVKATIMTGDTPINIFGRNVLTALGMSLNLPVAKIEPIKIMLKPGKDGPRLKQWPLTKEKIEALKEICEKMEKEGQLEEAPPTNPYNTPTFAIKKKDKNKWRMLIDFRELNKVTQDFTEIQLGIPHPAGLAKKRRITVLDVGDAYFSIPLHEDFRQYTAFTLPSVNNAEPGKRYIYKVLPQGWKGSPAIFQYTMRQILEPFRKANEDVIIIQYMDDILIASDRTDLEHDKVVLQLKELLNGLGFSTPDEKFQKDPPYRWMGYELWPTKWKLQKIQLPQKEVWTVNDIQKLVGVLNWAAQIYPGIKTKHLCRLIRGKMTLTEEVQWTELAEAELEENRIILSQKQEGHYYQEEKKLEATVQKDQDNQWTYKVHQGEKILKGGKICKDKKYPYQRVRLLAQVVQKIGKEALVIWGRIPKFHLPVERDTWEQWWDNYWQVTWIPDWDFVSTPPLVRLAFNLVGEPVPGAETFYTDGSCNRQSKEGKAGYITDRGRDRVKVLEQTTNQQAELEAFAMALTDSGPKANIIVDSQYVMGIVAGQPTESENRIVNQIIEEMIKKEAIYVAWVPAHKGIGGNQEVDHLVSQGIRQVLFLEKIEPAQEEHEKYHSNIKELSHKFGIPKLVARQIVNTCAHVQQKGEAIHGQVNAELGTWQMDCTHLEGKVIIVAVHVASGFIEAEVIPQESGRQTALFLLKLASRWPITHLHTDNGANFTSQEVKMVAWWVGIEQTFGVPYNPQSQGVVEAMNHHLKNQIDRIREQANTVETIVLMAVHCMNFKRRGGIGDMTPAERIINMITTEQEIQFLQAKNSKLKNFRVYFREGRDQLWKGPGELLWKGDGAVIVKVGTEIKVVPRRKAKIIKDYGGRQEMDSGSHLEGAREDGEMA.

Residue Gly-2 is the site of N-myristoyl glycine; by host attachment. The tract at residues 7–31 (VLRGKKADELEKIRLRPGGKKKYKL) is interaction with Gp41. The short motif at 16–22 (LEKIRLR) is the Nuclear export signal element. A Nuclear localization signal motif is present at residues 26 to 32 (KKKYKLK). Residues 189 to 226 (NCVGDHQAAMQIIREIINEEAADWDVAHPIPGPLPAGQ) form an interaction with human PPIA/CYPA and NUP153 region. The dimerization/Multimerization of capsid protein p24 stretch occupies residues 277–363 (YNPTNILDIN…GGPGQKARLM (87 aa)). CCHC-type zinc fingers lie at residues 387 to 404 (FKCWNCGKEGHSARQWSA) and 408 to 425 (QGCWKCGKSGHVMANCPD). Positions 436–467 (LGKEGPQLPRGPSPAGANTNSTPIGSSSGPTG) are disordered. Over residues 453–467 (NTNSTPIGSSSGPTG) the composition is skewed to low complexity. A dimerization of protease region spans residues 511 to 515 (PQFSL). One can recognise a Peptidase A2 domain in the interval 530–599 (VEVLLDTRAN…TPINIFGRNV (70 aa)). Asp-535 functions as the For protease activity; shared with dimeric partner in the catalytic mechanism. 2 dimerization of protease regions span residues 559-565 (GIGGFIN) and 598-610 (NVLTALGMSLNLP). The 191-residue stretch at 653–843 (EGQLEEAPPT…PPYRWMGYEL (191 aa)) folds into the Reverse transcriptase domain. Residues Asp-719, Asp-794, and Asp-795 each coordinate Mg(2+). The segment at 836–844 (YRWMGYELW) is RT 'primer grip'. The short motif at 1006–1022 (WEQWWDNYWQVTWIPDW) is the Tryptophan repeat motif element. The region spanning 1042-1165 (VPGAETFYTD…VDHLVSQGIR (124 aa)) is the RNase H type-1 domain. 4 residues coordinate Mg(2+): Asp-1051, Glu-1086, Asp-1106, and Asp-1157. An Integrase-type; degenerate zinc finger spans residues 1171-1212 (EKIEPAQEEHEKYHSNIKELSHKFGIPKLVARQIVNTCAHVQ). The 152-residue stretch at 1221 to 1372 (QVNAELGTWQ…TPAERIINMI (152 aa)) folds into the Integrase catalytic domain. Mg(2+) is bound by residues Asp-1232, Asp-1284, and Glu-1320. Residues 1391–1438 (FRVYFREGRDQLWKGPGELLWKGDGAVIVKVGTEIKVVPRRKAKIIKD) constitute a DNA-binding region (integrase-type).

As to quaternary structure, homotrimer; further assembles as hexamers of trimers. Interacts with gp41 (via C-terminus). Interacts with host CALM1; this interaction induces a conformational change in the Matrix protein, triggering exposure of the myristate group. Interacts with host AP3D1; this interaction allows the polyprotein trafficking to multivesicular bodies during virus assembly. Part of the pre-integration complex (PIC) which is composed of viral genome, matrix protein, Vpr and integrase. Homodimer; the homodimer further multimerizes as homohexamers or homopentamers. Interacts with human PPIA/CYPA. Interacts with human NUP153. Interacts with host PDZD8; this interaction stabilizes the capsid. Interacts with monkey TRIM5; this interaction destabilizes the capsid. In terms of assembly, homodimer, whose active site consists of two apposed aspartic acid residues. As to quaternary structure, heterodimer of p66 RT and p51 RT (RT p66/p51). Heterodimerization of RT is essential for DNA polymerase activity. The overall folding of the subdomains is similar in p66 RT and p51 RT but the spatial arrangements of the subdomains are dramatically different. Homotetramer; may further associate as a homohexadecamer. Part of the pre-integration complex (PIC) which is composed of viral genome, matrix protein, Vpr and integrase. Interacts with human SMARCB1/INI1 and human PSIP1/LEDGF isoform 1. Interacts with human KPNA3; this interaction might play a role in nuclear import of the pre-integration complex. Interacts with human NUP153; this interaction might play a role in nuclear import of the pre-integration complex. Mg(2+) serves as cofactor. Specific enzymatic cleavages by the viral protease yield mature proteins. The protease is released by autocatalytic cleavage. The polyprotein is cleaved during and after budding, this process is termed maturation. Proteolytic cleavage of p66 RT removes the RNase H domain to yield the p51 RT subunit. Nucleocapsid protein p7 might be further cleaved after virus entry.

The protein resides in the host cell membrane. It is found in the host endosome. It localises to the host multivesicular body. The protein localises to the virion membrane. Its subcellular location is the host nucleus. The protein resides in the host cytoplasm. It is found in the virion. The catalysed reaction is Endopeptidase for which the P1 residue is preferably hydrophobic.. It catalyses the reaction Endohydrolysis of RNA in RNA/DNA hybrids. Three different cleavage modes: 1. sequence-specific internal cleavage of RNA. Human immunodeficiency virus type 1 and Moloney murine leukemia virus enzymes prefer to cleave the RNA strand one nucleotide away from the RNA-DNA junction. 2. RNA 5'-end directed cleavage 13-19 nucleotides from the RNA end. 3. DNA 3'-end directed cleavage 15-20 nucleotides away from the primer terminus.. It carries out the reaction 3'-end directed exonucleolytic cleavage of viral RNA-DNA hybrid.. The enzyme catalyses DNA(n) + a 2'-deoxyribonucleoside 5'-triphosphate = DNA(n+1) + diphosphate. Protease: The viral protease is inhibited by many synthetic protease inhibitors (PIs), such as amprenavir, atazanavir, indinavir, loprinavir, nelfinavir, ritonavir and saquinavir. Use of protease inhibitors in tritherapy regimens permit more ambitious therapeutic strategies. Reverse transcriptase/ribonuclease H: RT can be inhibited either by nucleoside RT inhibitors (NRTIs) or by non nucleoside RT inhibitors (NNRTIs). NRTIs act as chain terminators, whereas NNRTIs inhibit DNA polymerization by binding a small hydrophobic pocket near the RT active site and inducing an allosteric change in this region. Classical NRTIs are abacavir, adefovir (PMEA), didanosine (ddI), lamivudine (3TC), stavudine (d4T), tenofovir (PMPA), zalcitabine (ddC), and zidovudine (AZT). Classical NNRTIs are atevirdine (BHAP U-87201E), delavirdine, efavirenz (DMP-266), emivirine (I-EBU), and nevirapine (BI-RG-587). The tritherapies used as a basic effective treatment of AIDS associate two NRTIs and one NNRTI. Functionally, mediates, with Gag polyprotein, the essential events in virion assembly, including binding the plasma membrane, making the protein-protein interactions necessary to create spherical particles, recruiting the viral Env proteins, and packaging the genomic RNA via direct interactions with the RNA packaging sequence (Psi). Gag-Pol polyprotein may regulate its own translation, by the binding genomic RNA in the 5'-UTR. At low concentration, the polyprotein would promote translation, whereas at high concentration, the polyprotein would encapsidate genomic RNA and then shut off translation. Its function is as follows. Targets the polyprotein to the plasma membrane via a multipartite membrane-binding signal, that includes its myristoylated N-terminus. Matrix protein is part of the pre-integration complex. Implicated in the release from host cell mediated by Vpu. Binds to RNA. Forms the conical core that encapsulates the genomic RNA-nucleocapsid complex in the virion. Most core are conical, with only 7% tubular. The core is constituted by capsid protein hexamer subunits. The core is disassembled soon after virion entry. Host restriction factors such as TRIM5-alpha or TRIMCyp bind retroviral capsids and cause premature capsid disassembly, leading to blocks in reverse transcription. Capsid restriction by TRIM5 is one of the factors which restricts HIV-1 to the human species. Host PIN1 apparently facilitates the virion uncoating. On the other hand, interactions with PDZD8 or CYPA stabilize the capsid. In terms of biological role, encapsulates and protects viral dimeric unspliced genomic RNA (gRNA). Binds these RNAs through its zinc fingers. Acts as a nucleic acid chaperone which is involved in rearangement of nucleic acid secondary structure during gRNA retrotranscription. Also facilitates template switch leading to recombination. As part of the polyprotein, participates in gRNA dimerization, packaging, tRNA incorporation and virion assembly. Functionally, aspartyl protease that mediates proteolytic cleavages of Gag and Gag-Pol polyproteins during or shortly after the release of the virion from the plasma membrane. Cleavages take place as an ordered, step-wise cascade to yield mature proteins. This process is called maturation. Displays maximal activity during the budding process just prior to particle release from the cell. Also cleaves Nef and Vif, probably concomitantly with viral structural proteins on maturation of virus particles. Hydrolyzes host EIF4GI and PABP1 in order to shut off the capped cellular mRNA translation. The resulting inhibition of cellular protein synthesis serves to ensure maximal viral gene expression and to evade host immune response. Its function is as follows. Multifunctional enzyme that converts the viral RNA genome into dsDNA in the cytoplasm, shortly after virus entry into the cell. This enzyme displays a DNA polymerase activity that can copy either DNA or RNA templates, and a ribonuclease H (RNase H) activity that cleaves the RNA strand of RNA-DNA heteroduplexes in a partially processive 3' to 5' endonucleasic mode. Conversion of viral genomic RNA into dsDNA requires many steps. A tRNA(3)-Lys binds to the primer-binding site (PBS) situated at the 5'-end of the viral RNA. RT uses the 3' end of the tRNA primer to perform a short round of RNA-dependent minus-strand DNA synthesis. The reading proceeds through the U5 region and ends after the repeated (R) region which is present at both ends of viral RNA. The portion of the RNA-DNA heteroduplex is digested by the RNase H, resulting in a ssDNA product attached to the tRNA primer. This ssDNA/tRNA hybridizes with the identical R region situated at the 3' end of viral RNA. This template exchange, known as minus-strand DNA strong stop transfer, can be either intra- or intermolecular. RT uses the 3' end of this newly synthesized short ssDNA to perform the RNA-dependent minus-strand DNA synthesis of the whole template. RNase H digests the RNA template except for two polypurine tracts (PPTs) situated at the 5'-end and near the center of the genome. It is not clear if both polymerase and RNase H activities are simultaneous. RNase H probably can proceed both in a polymerase-dependent (RNA cut into small fragments by the same RT performing DNA synthesis) and a polymerase-independent mode (cleavage of remaining RNA fragments by free RTs). Secondly, RT performs DNA-directed plus-strand DNA synthesis using the PPTs that have not been removed by RNase H as primers. PPTs and tRNA primers are then removed by RNase H. The 3' and 5' ssDNA PBS regions hybridize to form a circular dsDNA intermediate. Strand displacement synthesis by RT to the PBS and PPT ends produces a blunt ended, linear dsDNA copy of the viral genome that includes long terminal repeats (LTRs) at both ends. Catalyzes viral DNA integration into the host chromosome, by performing a series of DNA cutting and joining reactions. This enzyme activity takes place after virion entry into a cell and reverse transcription of the RNA genome in dsDNA. The first step in the integration process is 3' processing. This step requires a complex comprising the viral genome, matrix protein, Vpr and integrase. This complex is called the pre-integration complex (PIC). The integrase protein removes 2 nucleotides from each 3' end of the viral DNA, leaving recessed CA OH's at the 3' ends. In the second step, the PIC enters cell nucleus. This process is mediated through integrase and Vpr proteins, and allows the virus to infect a non dividing cell. This ability to enter the nucleus is specific of lentiviruses, other retroviruses cannot and rely on cell division to access cell chromosomes. In the third step, termed strand transfer, the integrase protein joins the previously processed 3' ends to the 5' ends of strands of target cellular DNA at the site of integration. The 5'-ends are produced by integrase-catalyzed staggered cuts, 5 bp apart. A Y-shaped, gapped, recombination intermediate results, with the 5'-ends of the viral DNA strands and the 3' ends of target DNA strands remaining unjoined, flanking a gap of 5 bp. The last step is viral DNA integration into host chromosome. This involves host DNA repair synthesis in which the 5 bp gaps between the unjoined strands are filled in and then ligated. Since this process occurs at both cuts flanking the HIV genome, a 5 bp duplication of host DNA is produced at the ends of HIV-1 integration. Alternatively, Integrase may catalyze the excision of viral DNA just after strand transfer, this is termed disintegration. The chain is Gag-Pol polyprotein (gag-pol) from Homo sapiens (Human).